The primary structure comprises 311 residues: MPETCPNTVTKRRCAVVTGGNKGIGFEICKQLSSNGIMVVLTCRDVTKGHEAVEKLKNSNHENVVFHQLDVTDPIATMSSLADFIKTHFGKLDILVNNAGVAGFSVDADRFKAMISDIGEDSEELVKIYEKPEAQELMSETYELAEECLKINYNGVKSVTEVLIPLLQLSDSPRIVNVSSSTGSLKYVSNETALEILGDGDALTEERIDMVVNMLLKDFKENLIETNGWPSFGAAYTTSKACLNAYTRVLANKIPKFQVNCVCPGLVKTEMNYGIGNYTAEEGAEHVVRIALFPDDGPSGFFYDCSELSAF.

Residues 21–24, R44, 70–71, and N98 contribute to the NADP(+) site; these read NKGI and DV. Y129 and S180 together coordinate substrate. NADP(+) is bound by residues Y236, K240, and 267-272; that span reads VKTEMN. The Proton acceptor role is filled by Y236. The cysteines at positions 263 and 305 are disulfide-linked.

Belongs to the short-chain dehydrogenases/reductases (SDR) family.

It carries out the reaction (7S)-salutaridinol + NADP(+) = salutaridine + NADPH + H(+). It participates in alkaloid biosynthesis; morphine biosynthesis. With respect to regulation, strong substrate inhibition. Was thought to be due to mutually exclusive productive and non-productive modes of substrate binding in the active site. Alternatively, SALR may undergo significant conformational changes during catalytic turnover. Functionally, short-chain dehydrogenases/reductases involved in biosynthesis of morphinan-type benzylisoquinoline and opiate alkaloids natural products. Catalyzes specifically the stereospecific conversion of salutaridine to salutaridinol. The sequence is that of Salutaridine reductase from Papaver somniferum (Opium poppy).